The sequence spans 512 residues: Maturase K (512 aa).

The protein belongs to the intron maturase 2 family. MatK subfamily.

The protein localises to the plastid. It localises to the chloroplast. Usually encoded in the trnK tRNA gene intron. Probably assists in splicing its own and other chloroplast group II introns. This Acer platanoides (Norway maple) protein is Maturase K.